We begin with the raw amino-acid sequence, 1935 residues long: Myosin-7 (1935 aa).

Positions 32-81 constitute a Myosin N-terminal SH3-like domain; that stretch reads DLKKDVFVPDDKQEFVKAKIVSREGGKVTAETEYGKTVTVKEDQVMQQNP. A Myosin motor domain is found at 85–778; sequence DKIEDMAMLT…LLGLLEEMRD (694 aa). The residue at position 129 (lysine 129) is an N6,N6,N6-trimethyllysine. Position 178-185 (178-185) interacts with ATP; sequence GESGAGKT. Threonine 378 is modified (phosphothreonine). Actin-binding regions lie at residues 655-677 and 757-771; these read LNKL…IPNE and KFGH…GLLG. An IQ domain is found at 781–810; sequence LSRIITRIQAQSRGVLARMEYKKLLERRDS. A coiled-coil region spans residues 839–1935; that stretch reads LLKSAEREKE…DIGTKGLNEE (1097 aa). Residues serine 1137 and serine 1269 each carry the phosphoserine modification. Threonine 1282 bears the Phosphothreonine mark. Residue tyrosine 1308 is modified to Phosphotyrosine. Phosphothreonine is present on threonine 1309. Position 1510 is a phosphoserine (serine 1510). Threonine 1513 is modified (phosphothreonine). The disordered stretch occupies residues 1907-1935; it reads EERADIAESQVNKLRAKSRDIGTKGLNEE. Residues 1923-1935 show a composition bias toward basic and acidic residues; sequence KSRDIGTKGLNEE.

This sequence belongs to the TRAFAC class myosin-kinesin ATPase superfamily. Myosin family. In terms of assembly, muscle myosin is a hexameric protein that consists of 2 heavy chain subunits (MHC), 2 alkali light chain subunits (MLC) and 2 regulatory light chain subunits (MLC-2). Interacts with ECPAS. Interacts (via C-terminus) with LRRC39. Both wild type and variant Gln-403 are detected in skeletal muscle (at protein level).

It is found in the cytoplasm. It localises to the myofibril. Its subcellular location is the sarcomere. Myosins are actin-based motor molecules with ATPase activity essential for muscle contraction. Forms regular bipolar thick filaments that, together with actin thin filaments, constitute the fundamental contractile unit of skeletal and cardiac muscle. The polypeptide is Myosin-7 (MYH7) (Homo sapiens (Human)).